The primary structure comprises 167 residues: UPF0114 protein in repA1-repA2 intergenic region (167 aa).

Transmembrane regions (helical) follow at residues 15 to 35 (LMFP…LKFF), 53 to 73 (LVLV…LVMV), and 136 to 156 (IMLC…MAYI).

The protein belongs to the UPF0114 family.

It localises to the cell membrane. The protein is UPF0114 protein in repA1-repA2 intergenic region of Buchnera aphidicola subsp. Diuraphis noxia.